The sequence spans 329 residues: 31 kDa immunogenic protein (329 aa).

An N-terminal signal peptide occupies residues 1–28 (MKFGSKIRRLAVAAVAGAIALGASFAVA).

This Brucella abortus biovar 1 (strain 9-941) protein is 31 kDa immunogenic protein (bcsP31).